The following is a 1098-amino-acid chain: Bifunctional helicase and thymine dioxygenase JBP2 (1098 aa).

The tract at residues 1–540 (MLNGLTRVST…PPLFVPTRLA (540 aa)) is thymine dioxygenase. Residues His415, Asp417, and His465 each contribute to the Fe cation site. Arg479 contacts 2-oxoglutarate. The segment at 541-1098 (SHLAPVQLAA…RYQESVRESE (558 aa)) is DNA Helicase. The 176-residue stretch at 555-730 (VERTEKQSGC…YRLVGWVNKG (176 aa)) folds into the Helicase ATP-binding domain. 568–575 (MTMGLGKT) serves as a coordination point for ATP. The DEAH box signature appears at 681–684 (DEGH). Positions 897–1057 (VLVDIVLRVQ…ALPDELEDCA (161 aa)) constitute a Helicase C-terminal domain.

This sequence in the C-terminal section; belongs to the SNF2/RAD54 helicase family. The protein in the N-terminal section; belongs to the TET family. JBP2 subfamily. Fe(2+) serves as cofactor.

The protein localises to the nucleus. The enzyme catalyses ATP + H2O = ADP + phosphate + H(+). The catalysed reaction is thymine + 2-oxoglutarate + O2 = 5-hydroxymethyluracil + succinate + CO2. Functionally, dioxygenase that catalyzes the first step of DNA base J (beta-d-glucosyl-HOMedU) biosynthesis by converting thymine to 5-hydroxymethyluracil (HOMedU). DNA base J is a hypermodified thymidine residue found in the genome of kinetoplastid parasites, which is localized primarily to repetitive DNA, namely the telomeres, and is implicated in the regulation of antigenic variation. Probably also acts as a DNA helicase. Recognizes and binds specific regions of the genome, hydrolyzes ATP and allows the DNA base J de novo synthesis. Involved in initial synthesis of DNA base J, JBP1 being able to act via the basal level of DNA base J and propagate further synthesis. In contrast to JBP1, it does not specifically bind DNA base J, however it binds chromatin. The polypeptide is Bifunctional helicase and thymine dioxygenase JBP2 (JBP2) (Leishmania tarentolae (Sauroleishmania tarentolae)).